Consider the following 391-residue polypeptide: 5-amino-6-(D-ribitylamino)uracil--L-tyrosine 4-hydroxyphenyl transferase (391 aa).

The Radical SAM core domain maps to 55 to 302 (VTYVINRNIN…GAVARIYLGN (248 aa)). Positions 69, 73, and 76 each coordinate [4Fe-4S] cluster.

Belongs to the radical SAM superfamily. CofH family. Consists of two subunits, CofG and CofH. The cofactor is [4Fe-4S] cluster.

It carries out the reaction 5-amino-6-(D-ribitylamino)uracil + L-tyrosine + S-adenosyl-L-methionine = 5-amino-5-(4-hydroxybenzyl)-6-(D-ribitylimino)-5,6-dihydrouracil + 2-iminoacetate + 5'-deoxyadenosine + L-methionine + H(+). Its pathway is cofactor biosynthesis; coenzyme F0 biosynthesis. In terms of biological role, catalyzes the radical-mediated synthesis of 5-amino-5-(4-hydroxybenzyl)-6-(D-ribitylimino)-5,6-dihydrouracil from 5-amino-6-(D-ribitylamino)uracil and L-tyrosine. The sequence is that of 5-amino-6-(D-ribitylamino)uracil--L-tyrosine 4-hydroxyphenyl transferase from Nostoc sp. (strain PCC 7120 / SAG 25.82 / UTEX 2576).